Here is a 982-residue protein sequence, read N- to C-terminus: NACHT, LRR and PYD domains-containing protein 4C (982 aa).

Residues 1–93 (MASFFSDFGL…MERAGREIAG (93 aa)) form the Pyrin domain. The NACHT domain occupies 148–471 (HMVFLQGAAG…FYLLKSHMDH (324 aa)). Position 154-161 (154-161 (GAAGIGKS)) interacts with ATP. 7 LRR repeats span residues 594–617 (CSTL…HSYT), 689–716 (NQCL…VLSQ), 746–773 (SKML…LCHP), 802–825 (NKTL…VLCG), 827–844 (LSLP…YCLI), 859–882 (NQNL…LLCD), and 916–940 (CKTL…LFEA).

This sequence belongs to the NLRP family.

Its function is as follows. May be involved in inflammation and recognition of cytosolic pathogen-associated molecular patterns (PAMPs) not intercepted by membrane-bound receptors. This is NACHT, LRR and PYD domains-containing protein 4C (Nlrp4c) from Mus musculus (Mouse).